The following is a 337-amino-acid chain: MAAGTSTLLSLSGPADHMAEGKGAPLRPSVEKRWKLMEPKQTQAGMFKKMSLVDSDTAAGKGSQDEAYTELSLPTAPNKPRLDRPRACKAYTEQRHNTFTELSCLQERPGDIQAQTRKLENPEGQLGPQQLPSSFLRASGDGTVCSAWPGAPRSEQKSAFSKPAKRPAEKPKRSPMLLAGGSAEGSWELSGLITTVDIPYWAHLSTFKFMGDFWKLHTLSQNILLCNAFQGAPTPWLEHTQVQAPTSSAPSSTASRALLPPTLSSLGLSTQNWCAKCNLAFRLTADLVFHMRSHHKREHVGPDPHSKKRREEVLTCPVCHEYFRERHHLSRHMASHS.

Polar residues predominate over residues 1-10 (MAAGTSTLLS). Disordered regions lie at residues 1–32 (MAAG…SVEK), 55–83 (SDTA…PRLD), and 146–179 (SAWP…MLLA). An important for transcriptional repression activity region spans residues 69-184 (TELSLPTAPN…PMLLAGGSAE (116 aa)). C2H2-type zinc fingers lie at residues 272–299 (NWCA…KREH) and 314–336 (LTCP…MASH). Residues 295-302 (HKREHVGP) carry the Nuclear localization signal motif.

It belongs to the krueppel C2H2-type zinc-finger protein family. As to quaternary structure, interacts with OLIG2.

It is found in the nucleus. Functionally, transcriptional repressor. Plays a role in oligodendrocyte differentiation, together with OLIG2. Mediates Notch signaling-activated formation of oligodendrocyte precursors. Promotes differentiation of adult neural stem progenitor cells (NSPCs) into mature oligodendrocytes and contributes to remyelination following nerve injury. In Mus musculus (Mouse), this protein is Zinc finger protein 488 (Znf488).